Reading from the N-terminus, the 283-residue chain is Vitamin K epoxide reductase homolog (283 aa).

Over 1 to 20 (MASYLKLKAQEETWLQRHSR) the chain is Cytoplasmic. Residues 21 to 41 (LILAILAGLGSLLTAYLTYTK) traverse the membrane as a helical segment. Topologically, residues 42 to 66 (LTEQPAAFCTGDGGCDLVLSSRWAE) are periplasmic. An intrachain disulfide couples cysteine 50 to cysteine 56. 59–65 (VLSSRWA) provides a ligand contact to a quinone. Residues 67–87 (FLGIPTAAVGLLGFLGVLALA) traverse the membrane as a helical segment. The Cytoplasmic segment spans residues 88–102 (VLPDGLPLVKRWRWP). The helical transmembrane segment at 103–123 (ALFGLVSAMTAFEMYMLYLMV) threads the bilayer. 111-122 (MTAFEMYMLYLM) contacts a quinone. The Periplasmic portion of the chain corresponds to 124-128 (AVLRQ). Residues 129 to 149 (FCMYCTTAIILVAGLGLVTVL) form a helical membrane-spanning segment. Residues cysteine 130 and cysteine 133 are joined by a disulfide bond. Residues 150-158 (GHRWLDGGK) lie on the Cytoplasmic side of the membrane. The helical transmembrane segment at 159–179 (LAFSYILVAFLTLVTTIGVYA) threads the bilayer. Over 180–283 (NQVPPPSPLA…ASGYPLEEGR (104 aa)) the chain is Periplasmic. Positions 186–283 (SPLAVGLAAH…ASGYPLEEGR (98 aa)) are thioredoxin-like domain. Cystine bridges form between cysteine 209–cysteine 212 and cysteine 231–cysteine 244.

Belongs to the VKOR family.

It is found in the membrane. Its activity is regulated as follows. Inhibited by ferulenol. In terms of biological role, thiol-disulfide oxidoreductase that catalyzes vitamin K-dependent disulfide bond formation in periplasmic target proteins. This chain is Vitamin K epoxide reductase homolog, found in Synechococcus sp. (strain JA-2-3B'a(2-13)) (Cyanobacteria bacterium Yellowstone B-Prime).